A 70-amino-acid chain; its full sequence is Probable tautomerase RSp0893 (70 aa).

Pro-2 functions as the Proton acceptor; via imino nitrogen in the catalytic mechanism.

This sequence belongs to the 4-oxalocrotonate tautomerase family.

This chain is Probable tautomerase RSp0893, found in Ralstonia nicotianae (strain ATCC BAA-1114 / GMI1000) (Ralstonia solanacearum).